We begin with the raw amino-acid sequence, 242 residues long: Hairy and enhancer of split-related protein HELT (242 aa).

The 56-residue stretch at 10 to 65 (RTPVSHKVIEKRRRDRINRCLNELGKTVPMALAKQSSGKLEKAEILEMTVQYLRAL) folds into the bHLH domain. Residue Lys48 is modified to N6-acetyllysine. The 36-residue stretch at 87-122 (FHYGYHECMKNLVHYLTTVERMETKDTKYARILAFL) folds into the Orange domain.

The protein belongs to the HEY family. Self-associates. Interacts with HES5 and HEY2.

Its subcellular location is the nucleus. Transcriptional repressor which binds preferentially to the canonical E box sequence 5'-CACGCG-3'. This Homo sapiens (Human) protein is Hairy and enhancer of split-related protein HELT (HELT).